A 199-amino-acid chain; its full sequence is Fe/S biogenesis protein NfuA (199 aa).

Residues Cys-151 and Cys-154 each coordinate [4Fe-4S] cluster.

The protein belongs to the NfuA family. Homodimer. It depends on [4Fe-4S] cluster as a cofactor.

Involved in iron-sulfur cluster biogenesis. Binds a 4Fe-4S cluster, can transfer this cluster to apoproteins, and thereby intervenes in the maturation of Fe/S proteins. Could also act as a scaffold/chaperone for damaged Fe/S proteins. The sequence is that of Fe/S biogenesis protein NfuA from Xylella fastidiosa (strain 9a5c).